The sequence spans 199 residues: Glycerol-3-phosphate acyltransferase (199 aa).

5 helical membrane-spanning segments follow: residues 4–24 (FALF…AILI), 56–76 (LAVL…GYYL), 80–100 (QFEL…PIFF), 115–135 (IAPI…FVFL), and 154–176 (YVWW…LIYR).

Belongs to the PlsY family. As to quaternary structure, probably interacts with PlsX.

Its subcellular location is the cell inner membrane. The enzyme catalyses an acyl phosphate + sn-glycerol 3-phosphate = a 1-acyl-sn-glycero-3-phosphate + phosphate. It participates in lipid metabolism; phospholipid metabolism. Catalyzes the transfer of an acyl group from acyl-phosphate (acyl-PO(4)) to glycerol-3-phosphate (G3P) to form lysophosphatidic acid (LPA). This enzyme utilizes acyl-phosphate as fatty acyl donor, but not acyl-CoA or acyl-ACP. This chain is Glycerol-3-phosphate acyltransferase, found in Haemophilus influenzae (strain PittGG).